The following is a 602-amino-acid chain: Elongation factor 4 (602 aa).

Positions asparagine 2–arginine 184 constitute a tr-type G domain. Residues aspartate 14–threonine 19 and asparagine 131–aspartate 134 contribute to the GTP site.

Belongs to the TRAFAC class translation factor GTPase superfamily. Classic translation factor GTPase family. LepA subfamily.

The protein localises to the cell inner membrane. The enzyme catalyses GTP + H2O = GDP + phosphate + H(+). Its function is as follows. Required for accurate and efficient protein synthesis under certain stress conditions. May act as a fidelity factor of the translation reaction, by catalyzing a one-codon backward translocation of tRNAs on improperly translocated ribosomes. Back-translocation proceeds from a post-translocation (POST) complex to a pre-translocation (PRE) complex, thus giving elongation factor G a second chance to translocate the tRNAs correctly. Binds to ribosomes in a GTP-dependent manner. This chain is Elongation factor 4, found in Acidovorax ebreus (strain TPSY) (Diaphorobacter sp. (strain TPSY)).